We begin with the raw amino-acid sequence, 431 residues long: Urokinase-type plasminogen activator (431 aa).

An N-terminal signal peptide occupies residues 1–20; it reads MRALLARLLLCVLVVSDSKG. The 37-residue stretch at 27-63 folds into the EGF-like domain; the sequence is VPSNCDCLNGGTCVSNKYFSNIHWCNCPKKFGGQHCE. 6 cysteine pairs are disulfide-bonded: Cys31–Cys39, Cys33–Cys51, Cys53–Cys62, Cys70–Cys151, Cys91–Cys133, and Cys122–Cys146. Positions 34 to 57 are binds urokinase plasminogen activator surface receptor; it reads LNGGTCVSNKYFSNIHWCNCPKKF. Positions 69-151 constitute a Kringle domain; it reads TCYEGNGHFY…LVQECMVHDC (83 aa). Residues 152 to 178 form a connecting peptide region; it reads ADGKKPSSPPEELKFQCGQKTLRPRFK. Position 158 is a phosphoserine (Ser158). Disulfide bonds link Cys168-Cys299, Cys209-Cys225, Cys217-Cys288, Cys313-Cys382, Cys345-Cys361, and Cys372-Cys400. In terms of domain architecture, Peptidase S1 spans 179–424; it reads IVGGEFTTIE…FLPWIRSHTK (246 aa). Catalysis depends on charge relay system residues His224 and Asp275. A glycan (N-linked (GlcNAc...) asparagine) is linked at Asn322. A Phosphoserine modification is found at Ser323. Catalysis depends on Ser376, which acts as the Charge relay system.

This sequence belongs to the peptidase S1 family. As to quaternary structure, found in high and low molecular mass forms. Each consists of two chains, A and B. The high molecular mass form contains a long chain A which is cleaved to yield a short chain A. Forms heterodimer with SERPINA5. Binds LRP1B; binding is followed by internalization and degradation. Interacts with MRC2. Interacts with PLAUR. In complex with SERPINE1, interacts with PLAUR/uPAR. Interacts with SORL1 and LRP1, either alone or in complex with SERPINE1; these interactions are abolished in the presence of LRPAP1/RAP. The ternary complex composed of PLAUR-PLAU-PAI1 also interacts with SORLA. In terms of processing, phosphorylation of Ser-158 and Ser-323 abolishes proadhesive ability but does not interfere with receptor binding. Post-translationally, produced as an inactive single-chain protein (pro-uPA or sc-uPA), is processed into the active disulfide-linked two-chain form of PLAU/uPA by a proteolytic event mediated, at least, by TMPRSS4.

The protein resides in the secreted. The enzyme catalyses Specific cleavage of Arg-|-Val bond in plasminogen to form plasmin.. Its activity is regulated as follows. Inhibited by SERPINA5. Inhibited by SERPINE1. Specifically cleaves the zymogen plasminogen to form the active enzyme plasmin. This Pongo abelii (Sumatran orangutan) protein is Urokinase-type plasminogen activator (PLAU).